We begin with the raw amino-acid sequence, 184 residues long: Probable type 3 secretion system regulator AscH (184 aa).

The disordered stretch occupies residues 1 to 25; sequence MKIEGSDQLGGEQPQRQPLPPESMA.

Belongs to the YopR family.

It is found in the secreted. Functionally, may be involved in the regulation of the assembly of the type III secretion system (T3SS), also called injectisome, which is used to inject bacterial effector proteins into eukaryotic host cells. May control the polymerization of the needle. This chain is Probable type 3 secretion system regulator AscH, found in Aeromonas salmonicida subsp. salmonicida.